Reading from the N-terminus, the 635-residue chain is Chaperone protein DnaK (635 aa).

The residue at position 198 (Thr-198) is a Phosphothreonine; by autocatalysis. Residues Tyr-598–Lys-635 are disordered. Over residues His-613–Asp-624 the composition is skewed to basic and acidic residues. A compositionally biased stretch (acidic residues) spans Ala-625–Lys-635.

This sequence belongs to the heat shock protein 70 family.

In terms of biological role, acts as a chaperone. The protein is Chaperone protein DnaK of Geotalea uraniireducens (strain Rf4) (Geobacter uraniireducens).